A 336-amino-acid polypeptide reads, in one-letter code: Glycerol-3-phosphate dehydrogenase [NAD(P)+] (336 aa).

Residues Trp11, Arg33, and Lys105 each contribute to the NADPH site. Lys105, Gly141, and Ser143 together coordinate sn-glycerol 3-phosphate. An NADPH-binding site is contributed by Ala145. Positions 196, 249, 259, 260, and 261 each coordinate sn-glycerol 3-phosphate. Lys196 functions as the Proton acceptor in the catalytic mechanism. NADPH is bound at residue Arg260. 2 residues coordinate NADPH: Val284 and Glu286.

It belongs to the NAD-dependent glycerol-3-phosphate dehydrogenase family.

The protein resides in the cytoplasm. It catalyses the reaction sn-glycerol 3-phosphate + NAD(+) = dihydroxyacetone phosphate + NADH + H(+). The enzyme catalyses sn-glycerol 3-phosphate + NADP(+) = dihydroxyacetone phosphate + NADPH + H(+). Its pathway is membrane lipid metabolism; glycerophospholipid metabolism. In terms of biological role, catalyzes the reduction of the glycolytic intermediate dihydroxyacetone phosphate (DHAP) to sn-glycerol 3-phosphate (G3P), the key precursor for phospholipid synthesis. The polypeptide is Glycerol-3-phosphate dehydrogenase [NAD(P)+] (Delftia acidovorans (strain DSM 14801 / SPH-1)).